Consider the following 225-residue polypeptide: MSGDASTPEQDQNVVSGAVPATRESSPDAPEATSEQASAAVDPADRMQQLEQELSALKQEHDTLNSQYMRIAADFDNFRKRQSRDQDDMRKQLVCSTLTEILPVVDNFERARQQLNPEGEEAQALHRSYQGLYKQLVEVLKQQGVARMDVVGQEFDPNLHEAVLREESSEFAEDVVSEELQRGYHRDGRVLRHAMVKVSMGPGPSDPGSAPAEAAAAPDQTAEEA.

The segment covering 1–15 has biased composition (polar residues); sequence MSGDASTPEQDQNVV. Disordered stretches follow at residues 1–48 and 198–225; these read MSGD…DRMQ and VSMGPGPSDPGSAPAEAAAAPDQTAEEA. Residues 201 to 225 show a composition bias toward low complexity; it reads GPGPSDPGSAPAEAAAAPDQTAEEA.

Belongs to the GrpE family. In terms of assembly, homodimer.

The protein localises to the cytoplasm. Functionally, participates actively in the response to hyperosmotic and heat shock by preventing the aggregation of stress-denatured proteins, in association with DnaK and GrpE. It is the nucleotide exchange factor for DnaK and may function as a thermosensor. Unfolded proteins bind initially to DnaJ; upon interaction with the DnaJ-bound protein, DnaK hydrolyzes its bound ATP, resulting in the formation of a stable complex. GrpE releases ADP from DnaK; ATP binding to DnaK triggers the release of the substrate protein, thus completing the reaction cycle. Several rounds of ATP-dependent interactions between DnaJ, DnaK and GrpE are required for fully efficient folding. The polypeptide is Protein GrpE (Synechococcus sp. (strain CC9605)).